The primary structure comprises 502 residues: Cytochrome P450 monooxygenase AacuE (502 aa).

A helical membrane pass occupies residues 4–26 (AITGLVATVTTFLAYIVFLSYTP). Asparagine 393 carries N-linked (GlcNAc...) asparagine glycosylation. Residue cysteine 439 coordinates heme.

The protein belongs to the cytochrome P450 family. It depends on heme as a cofactor.

The protein resides in the membrane. It functions in the pathway secondary metabolite biosynthesis. In terms of biological role, cytochrome P450 monooxygenase; part of the gene cluster that mediates the biosynthesis of the tetrahydroxanthone dimer secalonic acid D. The pathway begins with the synthesis of atrochrysone thioester by the polyketide synthase AacuL. The atrochrysone carboxyl ACP thioesterase AacuM then breaks the thioester bond and releases the atrochrysone carboxylic acid from AacuL. Atrochrysone carboxylic acid is decarboxylated by the decarboxylase AacuI, and oxidized by the anthrone oxygenase AacuG to yield emodin. Emodin is then reduced to emodin hydroquinone by a yet unidentified oxidoreductase. A-ring reduction by the short chain dehydrogenase AacuN, dehydration by the scytalone dehydratase-like protein AacuK and probable spontaneous re-oxidation, results in overall deoxygenation to chrysophanol. Baeyer-Villiger oxidation by the Baeyer-Villiger monooxygenase (BVMO) AacuH then yields monodictyphenone. Monodictyphenone is transformed into compounds with the tetrahydroxanthone skeleton via methylesterification by the methyltransferase AacuQ, followed by the action of the flavin-dependent monooxygenase AacuC, the isomerase AacuP, and the short chain dehydrogenase/reductase AacuF or AacuD. AacuF and AacuD should accept the same compound as a substrate but perform the ketoreduction with a different stereoselectivity, thus yielding blennolides B and A, respectively. In the final step of the biosynthesis, the cytochrome P450 monooxygenase AacuE accepts blennolide B and/or blennolide A to conduct the dimerization reaction to furnish the tetrahydroxanthone dimers, secalonic acids D, B, and F. The chain is Cytochrome P450 monooxygenase AacuE from Aspergillus aculeatus (strain ATCC 16872 / CBS 172.66 / WB 5094).